We begin with the raw amino-acid sequence, 707 residues long: MSRFRILPLSIFLCFVSLFFCTESFTHQNGVVPSFDPSYSSPLLVKKDQRTSVVATEFGNISAVQIGDGYHIQFITLEPNALLLPLLLHSDMVFFVHTGTGILNWIDEESERKLELRRGDVFRLRSGTVFYVHSNEKLRVYAIFNVGKCLNDPCLGAYSSVRDLLLGFDDRTLRSAFAVPEDILRKIRDATKPPLIVNALPRNRTQGLEEDKWQSRLVRLFVSVEDVTDHLAMKPIVDTNKKKSRTFNVFEEDPDFENNNGRSIVVDEKDLDALKGSRFGVFMVNLTKGSMIGPHWNPSACEISIVLEGEGMVRVVNQQSLSSCKNDRKSESFMVEEGDVFVVPKFHPMAQMSFENSSFVFMGFSTSAKTNHPQFLVGQSSVLKVLDRDVVAVSFNLSNETIKGLLKAQKESVIFECASCAEGELSKLMREIEERKRREEEEIERRRKEEEEARKREEAKRREEEEAKRREEEETERKKREEEEARKREEERKREEEEAKRREEERKKREEEAEQARKREEEREKEEEMAKKREEERQRKEREEVERKRREEQERKRREEEARKREEERKREEEMAKRREQERQRKEREEVERKIREEQERKREEEMAKRREQERQKKEREEMERKKREEEARKREEEMAKIREEERQRKEREDVERKRREEEAMRREEERKREEEAAKRAEEERRKKEEEEEKRRWPPQPKPPEEI.

The first 24 residues, 1 to 24 (MSRFRILPLSIFLCFVSLFFCTES), serve as a signal peptide directing secretion. Residues 42–185 (PLLVKKDQRT…AFAVPEDILR (144 aa)) enclose the Cupin type-1 1 domain. 6 N-linked (GlcNAc...) asparagine glycosylation sites follow: Asn-60, Asn-203, Asn-285, Asn-356, Asn-396, and Asn-399. A Cupin type-1 2 domain is found at 247–403 (FNVFEEDPDF…SFNLSNETIK (157 aa)). Residues 439 to 696 (EEEEIERRRK…KKEEEEEKRR (258 aa)) are compositionally biased toward basic and acidic residues. The tract at residues 439 to 707 (EEEEIERRRK…PPQPKPPEEI (269 aa)) is disordered. Pro residues predominate over residues 698–707 (PPQPKPPEEI).

Belongs to the 7S seed storage protein family.

Functionally, seed storage protein. The chain is Vicilin-like seed storage protein At2g18540 from Arabidopsis thaliana (Mouse-ear cress).